A 190-amino-acid chain; its full sequence is Potassium-transporting ATPase KdpC subunit (190 aa).

The helical transmembrane segment at 10–30 (TFLFLLLITGGVYPLLTTALG) threads the bilayer.

The protein belongs to the KdpC family. As to quaternary structure, the system is composed of three essential subunits: KdpA, KdpB and KdpC.

It is found in the cell inner membrane. In terms of biological role, part of the high-affinity ATP-driven potassium transport (or Kdp) system, which catalyzes the hydrolysis of ATP coupled with the electrogenic transport of potassium into the cytoplasm. This subunit acts as a catalytic chaperone that increases the ATP-binding affinity of the ATP-hydrolyzing subunit KdpB by the formation of a transient KdpB/KdpC/ATP ternary complex. The sequence is that of Potassium-transporting ATPase KdpC subunit from Escherichia fergusonii (strain ATCC 35469 / DSM 13698 / CCUG 18766 / IAM 14443 / JCM 21226 / LMG 7866 / NBRC 102419 / NCTC 12128 / CDC 0568-73).